Consider the following 954-residue polypeptide: Serine/threonine-protein kinase ste20 (954 aa).

The segment covering 1-17 (MDGQLSLLSPTSSSSTS) has biased composition (low complexity). 2 disordered regions span residues 1-165 (MDGQ…YDPL) and 203-316 (AAPA…RKKS). The span at 18-28 (HSRKRLTKKQR) shows a compositional bias: basic residues. Composition is skewed to polar residues over residues 33-42 (NHRTSSSFNV), 57-75 (SASS…SLAR), and 100-121 (RSHT…TIPT). Composition is skewed to low complexity over residues 127-136 (SPASSSQPQT), 143-153 (SAVASTTVTSS), and 203-214 (AAPAPTSTTTIA). The segment covering 224-234 (VAPPPPPPPPA) has biased composition (pro residues). Composition is skewed to low complexity over residues 245–256 (ARSSKPSKSPKS) and 265–277 (ASSF…FSSA). The 14-residue stretch at 334–347 (ISAPENPVHVTHVG) folds into the CRIB domain. 2 disordered regions span residues 440-562 (PMIS…VQAS) and 587-655 (QAMA…SNAI). 2 stretches are compositionally biased toward pro residues: residues 463 to 475 (RAPP…PGPL) and 514 to 527 (MPPP…PYLP). Residues 674-925 (YRGFTKIGQG…AHDLLRHDFM (252 aa)) form the Protein kinase domain. ATP contacts are provided by residues 680–688 (IGQGASGGV) and lysine 703. The active-site Proton acceptor is the aspartate 793.

This sequence belongs to the protein kinase superfamily. STE Ser/Thr protein kinase family. STE20 subfamily.

The protein resides in the cytoplasm. Its subcellular location is the nucleus. The enzyme catalyses L-seryl-[protein] + ATP = O-phospho-L-seryl-[protein] + ADP + H(+). The catalysed reaction is L-threonyl-[protein] + ATP = O-phospho-L-threonyl-[protein] + ADP + H(+). Its function is as follows. MAP4K component of the MAPK pathway required for the mating pheromone response and the regulation of cell polarity and cell cycle. Phosphorylates histone H2B to form H2BS10ph. This chain is Serine/threonine-protein kinase ste20 (stk-4), found in Neurospora crassa (strain ATCC 24698 / 74-OR23-1A / CBS 708.71 / DSM 1257 / FGSC 987).